The sequence spans 624 residues: Phosphomethylpyrimidine synthase (624 aa).

Positions 40–61 (VPMRKISQSDTPTNTGREKNPP) are disordered. The span at 45-54 (ISQSDTPTNT) shows a compositional bias: polar residues. Substrate contacts are provided by residues N229, M258, Y287, H323, 343-345 (SRG), 384-387 (DGLR), and E423. H427 provides a ligand contact to Zn(2+). Y450 serves as a coordination point for substrate. H491 contributes to the Zn(2+) binding site. [4Fe-4S] cluster contacts are provided by C571, C574, and C579.

Belongs to the ThiC family. Homodimer. [4Fe-4S] cluster is required as a cofactor.

The enzyme catalyses 5-amino-1-(5-phospho-beta-D-ribosyl)imidazole + S-adenosyl-L-methionine = 4-amino-2-methyl-5-(phosphooxymethyl)pyrimidine + CO + 5'-deoxyadenosine + formate + L-methionine + 3 H(+). It participates in cofactor biosynthesis; thiamine diphosphate biosynthesis. In terms of biological role, catalyzes the synthesis of the hydroxymethylpyrimidine phosphate (HMP-P) moiety of thiamine from aminoimidazole ribotide (AIR) in a radical S-adenosyl-L-methionine (SAM)-dependent reaction. This Methylococcus capsulatus (strain ATCC 33009 / NCIMB 11132 / Bath) protein is Phosphomethylpyrimidine synthase.